The sequence spans 318 residues: Olfactory receptor 5G25 (318 aa).

At 1–25 (MMHRNQTVVTEFFFTGLTSSFHLQI) the chain is on the extracellular side. N-linked (GlcNAc...) asparagine glycosylation occurs at Asn5. A helical transmembrane segment spans residues 26–46 (VLFLTFLCVYLATLLGNLGMI). Residues 47-54 (ILIHQDTR) lie on the Cytoplasmic side of the membrane. Residues 55–75 (LHIPMYFFLSHLSFVDACSSS) traverse the membrane as a helical segment. Residues 76 to 99 (VISPKMLSDIFVDKKVISFLGCAI) are Extracellular-facing. A disulfide bond links Cys97 and Cys189. The chain crosses the membrane as a helical span at residues 100–120 (QFCLFSQFVVTECFLLASMAY). Over 121–133 (DRYVAICKPLLYT) the chain is Cytoplasmic. A helical membrane pass occupies residues 134–154 (LIMSQRVCVQLVIGPYSIGLI). The Extracellular segment spans residues 155–196 (STVVHTTSAFILPYCGPNLINHFFCDLLPVLSLACADTQMNK). The chain crosses the membrane as a helical span at residues 197–217 (HLLFIMAGILGVFSGIIILVS). The Cytoplasmic portion of the chain corresponds to 218-237 (YVYIAITILKINSADGRRKA). The chain crosses the membrane as a helical span at residues 238–258 (FSTCSSHLTAVSILYGTLFFI). Over 259–271 (YVRPSSSFSLDIN) the chain is Extracellular. A helical membrane pass occupies residues 272–292 (KVVSLFYTAVIPMLNPFIYSL). The Cytoplasmic segment spans residues 293 to 318 (RNKEVKDALIRTFEKKFCYSLQDKIL).

This sequence belongs to the G-protein coupled receptor 1 family.

Its subcellular location is the cell membrane. Functionally, potential odorant receptor. In Mus musculus (Mouse), this protein is Olfactory receptor 5G25.